The following is a 484-amino-acid chain: UDP-glycosyltransferase 73B4 (484 aa).

Residue histidine 18 is the Proton acceptor of the active site. Residues histidine 18 and asparagine 89 each coordinate an anthocyanidin. Residue aspartate 129 is the Charge relay of the active site. UDP-alpha-D-glucose is bound by residues alanine 356, glutamine 358, histidine 373, tryptophan 376, asparagine 377, serine 378, and glutamate 381. Alanine 396 provides a ligand contact to an anthocyanidin. Residues glutamate 397 and glutamine 398 each coordinate UDP-alpha-D-glucose.

It belongs to the UDP-glycosyltransferase family. In terms of tissue distribution, specifically expressed in roots.

The catalysed reaction is a flavonol + UDP-alpha-D-glucose = a flavonol 3-O-beta-D-glucoside + UDP + H(+). Its function is as follows. Possesses quercetin 3-O-glucosyltransferase and low 7-O-glucosyltransferase activities in vitro. Also active in vitro on benzoates and benzoate derivatives. Can detoxify the explosive 2,4,6-trinitrotoluene in plant by forming O- or C-glucose conjugates. This chain is UDP-glycosyltransferase 73B4 (UGT73B4), found in Arabidopsis thaliana (Mouse-ear cress).